Reading from the N-terminus, the 276-residue chain is Putative glycosyltransferase 6 domain-containing protein 1 (276 aa).

The Cytoplasmic segment spans residues 1-6; sequence MNSKRM. A helical; Signal-anchor for type II membrane protein membrane pass occupies residues 7-23; that stretch reads LLLVLFAFSLMLVERYF. Residues 24 to 276 lie on the Lumenal side of the membrane; the sequence is RNHQVEELRL…NKYFYLNKPT (253 aa). N74 carries an N-linked (GlcNAc...) asparagine glycan. Substrate contacts are provided by residues 82–87, 173–175, and 195–198; these read FATGRF, AAN, and HAWW. E263 serves as the catalytic Nucleophile.

This sequence belongs to the glycosyltransferase 6 family. It depends on Mn(2+) as a cofactor. As to expression, expressed in both healthy and inflamed gingival tissue samples at similar levels, with higher expression in the gingival connective tissue compared to gingival epithelium. Strongest expression in testis, followed by leukocytes.

Its subcellular location is the membrane. The chain is Putative glycosyltransferase 6 domain-containing protein 1 (GLT6D1) from Homo sapiens (Human).